The following is a 114-amino-acid chain: MLDVIKEIEAEQIRTDLPSFNVGDTVRIEVRIKEGEKERLQAFEGTVIKRQNGGLRETFTVRRVAYGVGVERTFPLNAPVIAGLKVVRRGKVRRAKLYYLRDRVGKAAKVKEIR.

The protein belongs to the bacterial ribosomal protein bL19 family.

Functionally, this protein is located at the 30S-50S ribosomal subunit interface and may play a role in the structure and function of the aminoacyl-tRNA binding site. The chain is Large ribosomal subunit protein bL19 from Clostridium acetobutylicum (strain ATCC 824 / DSM 792 / JCM 1419 / IAM 19013 / LMG 5710 / NBRC 13948 / NRRL B-527 / VKM B-1787 / 2291 / W).